A 123-amino-acid polypeptide reads, in one-letter code: Large ribosomal subunit protein uL14 (123 aa).

The protein belongs to the universal ribosomal protein uL14 family. In terms of assembly, part of the 50S ribosomal subunit. Forms a cluster with proteins L3 and L19. In the 70S ribosome, L14 and L19 interact and together make contacts with the 16S rRNA in bridges B5 and B8.

Functionally, binds to 23S rRNA. Forms part of two intersubunit bridges in the 70S ribosome. The chain is Large ribosomal subunit protein uL14 from Sodalis glossinidius (strain morsitans).